A 466-amino-acid chain; its full sequence is Glycine--tRNA ligase (466 aa).

Arginine 104 and glutamate 178 together coordinate substrate. Residues 210 to 212 (RNE), 220 to 225 (FRTREF), 294 to 295 (EL), and 338 to 341 (GADR) each bind ATP. 225 to 229 (FEQME) is a substrate binding site. 334–338 (EPSLG) contributes to the substrate binding site.

It belongs to the class-II aminoacyl-tRNA synthetase family. Homodimer.

The protein resides in the cytoplasm. The enzyme catalyses tRNA(Gly) + glycine + ATP = glycyl-tRNA(Gly) + AMP + diphosphate. Its function is as follows. Catalyzes the attachment of glycine to tRNA(Gly). The sequence is that of Glycine--tRNA ligase from Geobacillus thermodenitrificans (strain NG80-2).